We begin with the raw amino-acid sequence, 304 residues long: Carbonic anhydrase 5A, mitochondrial (304 aa).

Residues 1-34 (MLRAKMLGRGPYKPLAILRHMGPLCATRPQHWRF) constitute a mitochondrion transit peptide. Positions 35-295 (QHSYAEKHSN…LRGRNVRSSF (261 aa)) constitute an Alpha-carbonic anhydrase domain. H129, H131, and H154 together coordinate Zn(2+).

It belongs to the alpha-carbonic anhydrase family. The cofactor is Zn(2+). As to expression, high in liver, also detected in heart, lung, kidney, spleen and intestine.

It is found in the mitochondrion. The enzyme catalyses hydrogencarbonate + H(+) = CO2 + H2O. In terms of biological role, mitochondrial carbonic anhydrase that catalyzes the reversible conversion of carbon dioxide to bicarbonate/HCO3. Mitochondria are impermeable to HCO3, and thus this intramitochondrial carbonic anhydrase is pivotal in providing HCO3 for multiple mitochondrial enzymes that catalyze the formation of essential metabolites of intermediary metabolism in the urea and Krebs cycles. The protein is Carbonic anhydrase 5A, mitochondrial of Rattus norvegicus (Rat).